The primary structure comprises 249 residues: MVAFDANEALTPCREGRGIGAILFDRERLRQAEADLFSPQHWGSKARPVGEGGRGSAWFIDAPFGASVLRHYLRGGLAAKISHDQYLWRGADRTRSFAEFRLMRALREKKLPVPRPLAAFYMREGLRYRAAILMERIEGVRSLADRALVAGRGAPWEETGRLIARFHRAGLDHADLNAHNILFDGNGHGWLIDFDRGVIRIPATAWRERNLKRLLRSLIKLRGERSVEDVQKDYVRLRRAYDMAWNRGT.

D175 is an active-site residue.

It belongs to the protein kinase superfamily. KdkA/RfaP family.

It is found in the cell inner membrane. It catalyses the reaction an alpha-Kdo-(2-&gt;6)-lipid IVA + ATP = a 4-O-phospho-alpha-Kdo-(2-&gt;6)-lipid IVA + ADP + H(+). Its pathway is bacterial outer membrane biogenesis; LPS core biosynthesis. Functionally, catalyzes the ATP-dependent phosphorylation of the 3-deoxy-D-manno-octulosonic acid (Kdo) residue in Kdo-lipid IV(A) at the 4-OH position. The polypeptide is 3-deoxy-D-manno-octulosonic acid kinase (Stenotrophomonas maltophilia (strain R551-3)).